A 160-amino-acid polypeptide reads, in one-letter code: Cyclic pyranopterin monophosphate synthase (160 aa).

Substrate-binding positions include 75–77 and 113–114; these read LCH and ME. Residue aspartate 128 is part of the active site.

The protein belongs to the MoaC family. As to quaternary structure, homohexamer; trimer of dimers.

The catalysed reaction is (8S)-3',8-cyclo-7,8-dihydroguanosine 5'-triphosphate = cyclic pyranopterin phosphate + diphosphate. The protein operates within cofactor biosynthesis; molybdopterin biosynthesis. Functionally, catalyzes the conversion of (8S)-3',8-cyclo-7,8-dihydroguanosine 5'-triphosphate to cyclic pyranopterin monophosphate (cPMP). The protein is Cyclic pyranopterin monophosphate synthase of Methylobacterium sp. (strain 4-46).